The sequence spans 675 residues: Methionine--tRNA ligase (675 aa).

The short motif at 15 to 25 (PYANGSIHLGH) is the 'HIGH' region element. 4 residues coordinate Zn(2+): C146, C149, C159, and C162. The 'KMSKS' region signature appears at 332–336 (KMSKS). K335 is a binding site for ATP. The tRNA-binding domain maps to 573–675 (DFAKVDMRIA…SGAQPGMQVK (103 aa)).

The protein belongs to the class-I aminoacyl-tRNA synthetase family. MetG type 1 subfamily. Homodimer. Zn(2+) serves as cofactor.

It is found in the cytoplasm. The catalysed reaction is tRNA(Met) + L-methionine + ATP = L-methionyl-tRNA(Met) + AMP + diphosphate. Is required not only for elongation of protein synthesis but also for the initiation of all mRNA translation through initiator tRNA(fMet) aminoacylation. The sequence is that of Methionine--tRNA ligase from Yersinia pseudotuberculosis serotype I (strain IP32953).